Reading from the N-terminus, the 108-residue chain is Cuticle protein AM1199 (108 aa).

Position 1 is a pyrrolidone carboxylic acid (glutamine 1). The 66-residue stretch at 26 to 91 folds into the Chitin-binding type R&amp;R domain; sequence DGNFGYDFET…AESPLIPTPH (66 aa). The O-linked (HexNAc) threonine glycan is linked to threonine 89.

Arthrodial membrane.

This chain is Cuticle protein AM1199, found in Cancer pagurus (Rock crab).